Reading from the N-terminus, the 89-residue chain is Small ribosomal subunit protein uS15 (89 aa).

This sequence belongs to the universal ribosomal protein uS15 family. Part of the 30S ribosomal subunit. Forms a bridge to the 50S subunit in the 70S ribosome, contacting the 23S rRNA.

In terms of biological role, one of the primary rRNA binding proteins, it binds directly to 16S rRNA where it helps nucleate assembly of the platform of the 30S subunit by binding and bridging several RNA helices of the 16S rRNA. Its function is as follows. Forms an intersubunit bridge (bridge B4) with the 23S rRNA of the 50S subunit in the ribosome. The polypeptide is Small ribosomal subunit protein uS15 (Chlamydia pneumoniae (Chlamydophila pneumoniae)).